Consider the following 286-residue polypeptide: Shikimate dehydrogenase (NADP(+)) (286 aa).

Shikimate is bound by residues 19 to 21 and Thr-66; that span reads SVS. Catalysis depends on Lys-70, which acts as the Proton acceptor. 2 residues coordinate shikimate: Asn-91 and Asp-106. NADP(+) is bound by residues 130 to 134 and Ala-225; that span reads GAGGS. Shikimate is bound at residue Tyr-227. Gly-248 is an NADP(+) binding site.

This sequence belongs to the shikimate dehydrogenase family. In terms of assembly, homodimer.

The enzyme catalyses shikimate + NADP(+) = 3-dehydroshikimate + NADPH + H(+). It functions in the pathway metabolic intermediate biosynthesis; chorismate biosynthesis; chorismate from D-erythrose 4-phosphate and phosphoenolpyruvate: step 4/7. Its function is as follows. Involved in the biosynthesis of the chorismate, which leads to the biosynthesis of aromatic amino acids. Catalyzes the reversible NADPH linked reduction of 3-dehydroshikimate (DHSA) to yield shikimate (SA). In Dehalococcoides mccartyi (strain CBDB1), this protein is Shikimate dehydrogenase (NADP(+)).